The following is a 150-amino-acid chain: 3-hydroxyacyl-[acyl-carrier-protein] dehydratase FabZ (150 aa).

His-54 is a catalytic residue.

This sequence belongs to the thioester dehydratase family. FabZ subfamily.

The protein resides in the cytoplasm. The catalysed reaction is a (3R)-hydroxyacyl-[ACP] = a (2E)-enoyl-[ACP] + H2O. Functionally, involved in unsaturated fatty acids biosynthesis. Catalyzes the dehydration of short chain beta-hydroxyacyl-ACPs and long chain saturated and unsaturated beta-hydroxyacyl-ACPs. The polypeptide is 3-hydroxyacyl-[acyl-carrier-protein] dehydratase FabZ (Vibrio vulnificus (strain CMCP6)).